Consider the following 240-residue polypeptide: 1-(5-phosphoribosyl)-5-[(5-phosphoribosylamino)methylideneamino] imidazole-4-carboxamide isomerase (240 aa).

The Proton acceptor role is filled by Asp10. Asp131 serves as the catalytic Proton donor.

It belongs to the HisA/HisF family.

Its subcellular location is the cytoplasm. It catalyses the reaction 1-(5-phospho-beta-D-ribosyl)-5-[(5-phospho-beta-D-ribosylamino)methylideneamino]imidazole-4-carboxamide = 5-[(5-phospho-1-deoxy-D-ribulos-1-ylimino)methylamino]-1-(5-phospho-beta-D-ribosyl)imidazole-4-carboxamide. The protein operates within amino-acid biosynthesis; L-histidine biosynthesis; L-histidine from 5-phospho-alpha-D-ribose 1-diphosphate: step 4/9. In Shouchella clausii (strain KSM-K16) (Alkalihalobacillus clausii), this protein is 1-(5-phosphoribosyl)-5-[(5-phosphoribosylamino)methylideneamino] imidazole-4-carboxamide isomerase.